A 130-amino-acid polypeptide reads, in one-letter code: Phosphomevalonate dehydratase small subunit (130 aa).

Ser-62 acts as the Proton acceptor in catalysis.

Belongs to the AcnX type II small subunit family. Heterodimer composed of a large subunit (PMDh-L) and a small subunit (PMDh-S).

It carries out the reaction (R)-5-phosphomevalonate = (2E)-3-methyl-5-phosphooxypent-2-enoate + H2O. Its pathway is isoprenoid biosynthesis; isopentenyl diphosphate biosynthesis via mevalonate pathway. Its function is as follows. Component of a hydro-lyase that catalyzes the dehydration of mevalonate 5-phosphate (MVA5P) to form trans-anhydromevalonate 5-phosphate (tAHMP). Involved in the archaeal mevalonate (MVA) pathway, which provides fundamental precursors for isoprenoid biosynthesis, such as isopentenyl diphosphate (IPP) and dimethylallyl diphosphate (DMAPP). The polypeptide is Phosphomevalonate dehydratase small subunit (Thermococcus sibiricus (strain DSM 12597 / MM 739)).